The chain runs to 284 residues: UTP--glucose-1-phosphate uridylyltransferase (284 aa).

It belongs to the UDPGP type 2 family.

It carries out the reaction alpha-D-glucose 1-phosphate + UTP + H(+) = UDP-alpha-D-glucose + diphosphate. The sequence is that of UTP--glucose-1-phosphate uridylyltransferase (celA) from Komagataeibacter xylinus (Gluconacetobacter xylinus).